Consider the following 385-residue polypeptide: tRNA (guanine-N(7)-)-methyltransferase non-catalytic subunit wuho (385 aa).

WD repeat units lie at residues 68–108 (KVEV…AKLL), 155–194 (GHLS…DIHS), and 198–236 (GHKE…ELLH).

This sequence belongs to the WD repeat TRM82 family. Forms a heterodimer with the catalytic subunit Mettl1. Interacts with mei-P26 and weakly interacts with bgcn; required for the function or formation of the mei-P26-bgcn-bam-sxl complex. Interacts with nanos; may be involved in mei-P26-dependent derepression of the BMP signaling pathway. Interacts with Myc; the interaction may be mediated by mei-P26 and may be involved in the regulation of ribosome biogenesis. In terms of tissue distribution, in testis, it is present at high level in hub cells, a niche for germline stem cells of testis. Ubiquitously expressed in all testicular cells throughout spermatogenesis. Ubiquitously expressed in all germline and somatic cells of the ovary.

It localises to the nucleus. It is found in the cytoplasm. Its pathway is tRNA modification; N(7)-methylguanine-tRNA biosynthesis. Its function is as follows. Required for the Mettl1-dependent formation of N(7)-methylguanine at position 46 (m7G46) in tRNA. In the Mettl1-wuho methyltransferase complex, it is required to stabilize and induce conformational changes of the catalytic subunit. Required for binding of nanos mRNA and repression of translation by the mei-P26-bgcn-bam-sxl complex. May cooperate with mei-P26 and nanos to derepress the BMP signaling pathway. May cooperate with mei-P26 to suppress expression of a subset of microRNAs. May cooperate with mei-P26 to regulate bam expression levels in germline cells during gametogenesis. Required to promote mitosis to meiosis transition during gametogenesis. May regulate germline cell division in part by regulating ribosome biogenesis. The sequence is that of tRNA (guanine-N(7)-)-methyltransferase non-catalytic subunit wuho from Drosophila grimshawi (Hawaiian fruit fly).